An 81-amino-acid chain; its full sequence is MAGSTGERPFSDIVTSIRYWVIHSITIPMLFIAGWLFVSTGLAYDTFGTPRPDQYFTETRQEIPIVTDRYKAIDQINEFNN.

A helical membrane pass occupies residues 21–35 (VIHSITIPMLFIAGW). His-23 provides a ligand contact to heme.

This sequence belongs to the PsbE/PsbF family. In terms of assembly, heterodimer of an alpha subunit and a beta subunit. PSII is composed of 1 copy each of membrane proteins PsbA, PsbB, PsbC, PsbD, PsbE, PsbF, PsbH, PsbI, PsbJ, PsbK, PsbL, PsbM, PsbT, PsbX, PsbY, PsbZ, Psb30/Ycf12, peripheral proteins PsbO, CyanoQ (PsbQ), PsbU, PsbV and a large number of cofactors. It forms dimeric complexes. It depends on heme b as a cofactor.

It localises to the cellular thylakoid membrane. This b-type cytochrome is tightly associated with the reaction center of photosystem II (PSII). PSII is a light-driven water:plastoquinone oxidoreductase that uses light energy to abstract electrons from H(2)O, generating O(2) and a proton gradient subsequently used for ATP formation. It consists of a core antenna complex that captures photons, and an electron transfer chain that converts photonic excitation into a charge separation. This Picosynechococcus sp. (strain ATCC 27264 / PCC 7002 / PR-6) (Agmenellum quadruplicatum) protein is Cytochrome b559 subunit alpha.